A 197-amino-acid chain; its full sequence is Peptide deformylase (197 aa).

Cys106 and His148 together coordinate Fe cation. The active site involves Glu149. His152 is a Fe cation binding site.

The protein belongs to the polypeptide deformylase family. Requires Fe(2+) as cofactor.

The enzyme catalyses N-terminal N-formyl-L-methionyl-[peptide] + H2O = N-terminal L-methionyl-[peptide] + formate. Functionally, removes the formyl group from the N-terminal Met of newly synthesized proteins. Requires at least a dipeptide for an efficient rate of reaction. N-terminal L-methionine is a prerequisite for activity but the enzyme has broad specificity at other positions. The polypeptide is Peptide deformylase (Mycobacterium ulcerans (strain Agy99)).